The sequence spans 303 residues: L(+)-tartrate dehydratase subunit alpha (303 aa).

Residues Cys71, Cys190, and Cys277 each coordinate iron-sulfur cluster.

The protein belongs to the class-I fumarase family. In terms of assembly, tetramer of two alpha and two beta subunits. Iron-sulfur cluster serves as cofactor.

It carries out the reaction (2R,3R)-tartrate = oxaloacetate + H2O. The chain is L(+)-tartrate dehydratase subunit alpha (ttdA) from Escherichia coli O157:H7.